A 105-amino-acid chain; its full sequence is Small ribosomal subunit protein uS10 (105 aa).

This sequence belongs to the universal ribosomal protein uS10 family. Part of the 30S ribosomal subunit.

In terms of biological role, involved in the binding of tRNA to the ribosomes. This chain is Small ribosomal subunit protein uS10, found in Rickettsia canadensis (strain McKiel).